The primary structure comprises 78 residues: Translational regulator CsrA (78 aa).

It belongs to the CsrA/RsmA family. In terms of assembly, homodimer; the beta-strands of each monomer intercalate to form a hydrophobic core, while the alpha-helices form wings that extend away from the core.

The protein localises to the cytoplasm. Functionally, a translational regulator that binds mRNA to regulate translation initiation and/or mRNA stability. Usually binds in the 5'-UTR at or near the Shine-Dalgarno sequence preventing ribosome-binding, thus repressing translation. Its main target seems to be the major flagellin gene, while its function is anatagonized by FliW. The sequence is that of Translational regulator CsrA from Geobacter metallireducens (strain ATCC 53774 / DSM 7210 / GS-15).